Consider the following 521-residue polypeptide: U4/U6 small nuclear ribonucleoprotein Prp4 (521 aa).

Lys26 carries the post-translational modification N6-acetyllysine. WD repeat units lie at residues 228–267 (GDDRPISYCHFSPNSKMLATACWSGLCKLWSVPDCSLLHT), 270–317 (GHNT…PVAD), 320–359 (GHTVRVARVMWHPSGRFLGTTCYDRSWRLWDLEAQEEILH), 362–401 (GHSMGVYDIAFHQDGSLAGTGGLDAFGRVWDLRTGRCIMF), 404–443 (GHLKEIYGINFSPNGYHIATGSGDNTCKVWDLRQRRCVYT), 446–486 (AHQN…PLKT), and 489–521 (GHEGKVMGLDISSDGQLIATCSYDRTFKLWMAE).

Component of the precatalytic spliceosome (spliceosome B complex). Component of the U4/U6-U5 tri-snRNP complex, a building block of the precatalytic spliceosome (spliceosome B complex). The U4/U6-U5 tri-snRNP complex is composed of the U4, U6 and U5 snRNAs and at least PRPF3, PRPF4, PRPF6, PRPF8, PRPF31, SNRNP200, TXNL4A, SNRNP40, SNRPB, SNRPD1, SNRPD2, SNRPD3, SNRPE, SNRPF, SNRPG, DDX23, CD2BP2, PPIH, SNU13, EFTUD2, SART1 and USP39, plus LSM2, LSM3, LSM4, LSM5, LSM6, LSM7 and LSM8. Interacts directly with PRPF18, PPIH and PRPF3. Part of a heteromeric complex containing PPIH, PRPF3 and PRPF4 that is stable in the absence of RNA. Interacts with ERCC6.

It localises to the nucleus. It is found in the nucleus speckle. Its function is as follows. Plays a role in pre-mRNA splicing as component of the U4/U6-U5 tri-snRNP complex that is involved in spliceosome assembly, and as component of the precatalytic spliceosome (spliceosome B complex). This chain is U4/U6 small nuclear ribonucleoprotein Prp4 (Prpf4), found in Mus musculus (Mouse).